Here is an 82-residue protein sequence, read N- to C-terminus: MSDEEYSIYDEVEIEDMTYDPALQTYSYPCPCGDKFEIALADLQDGQDIAVCPSCSLMVRVIFEVDNLPKAPDAAASIAVSA.

The 57-residue stretch at 8 to 64 (IYDEVEIEDMTYDPALQTYSYPCPCGDKFEIALADLQDGQDIAVCPSCSLMVRVIFE) folds into the DPH-type MB domain. 4 residues coordinate Fe cation: C30, C32, C52, and C55.

It belongs to the DPH3 family. In terms of assembly, component of the 2-(3-amino-3-carboxypropyl)histidine synthase complex composed of dph-1, dph-2, dph-3 and a NADH-dependent reductase, predominantly cbr-1. Requires Fe(2+) as cofactor.

The protein resides in the cytoplasm. The protein localises to the nucleus. The enzyme catalyses [3Fe-4S](1+)-[protein] + Fe(2+)-[Dph3] = [3Fe-4S](0)-[protein] + Fe(3+)-[Dph3]. It catalyses the reaction 2 [3Fe-4S](0)-[protein] + 2 Fe(2+)-[Dph3] + NADH = 2 [4Fe-4S](1+)-[protein] + 2 [Dph3] + NAD(+) + H(+). Its pathway is protein modification; peptidyl-diphthamide biosynthesis. Functionally, required for the first step of diphthamide biosynthesis, a post-translational modification of histidine which occurs in elongation factor 2. Dph-1 and dph-2 transfer a 3-amino-3-carboxypropyl (ACP) group from S-adenosyl-L-methionine (SAM) to a histidine residue, the reaction is assisted by a reduction system comprising dph-3 and a NADH-dependent reductase, predominantly cbr-1. Acts as an electron donor to reduce the Fe-S cluster in dph1-dph2 keeping the [4Fe-4S] clusters in the active and reduced state. Restores iron to dph-1-dph-2 iron-sulfur clusters which have degraded from [4Fe-4S] to [3Fe-4S] by donating an iron atom to reform [4Fe-4S] clusters, in a manner dependent on the presence of elongation factor 2 and SAM. Associates with the elongator complex and is required for tRNA Wobble base modifications mediated by the elongator complex. The elongator complex is required for multiple tRNA modifications, including mcm5U (5-methoxycarbonylmethyl uridine), mcm5s 2U (5-methoxycarbonylmethyl-2-thiouridine), and ncm5U (5-carbamoylmethyl uridine). The chain is Diphthamide biosynthesis protein 3 (dph-3) from Neurospora crassa (strain ATCC 24698 / 74-OR23-1A / CBS 708.71 / DSM 1257 / FGSC 987).